Here is a 145-residue protein sequence, read N- to C-terminus: D-aminoacyl-tRNA deacylase (145 aa).

The Gly-cisPro motif, important for rejection of L-amino acids signature appears at 137-138; that stretch reads GP.

The protein belongs to the DTD family. Homodimer.

The protein resides in the cytoplasm. The enzyme catalyses glycyl-tRNA(Ala) + H2O = tRNA(Ala) + glycine + H(+). The catalysed reaction is a D-aminoacyl-tRNA + H2O = a tRNA + a D-alpha-amino acid + H(+). Functionally, an aminoacyl-tRNA editing enzyme that deacylates mischarged D-aminoacyl-tRNAs. Also deacylates mischarged glycyl-tRNA(Ala), protecting cells against glycine mischarging by AlaRS. Acts via tRNA-based rather than protein-based catalysis; rejects L-amino acids rather than detecting D-amino acids in the active site. By recycling D-aminoacyl-tRNA to D-amino acids and free tRNA molecules, this enzyme counteracts the toxicity associated with the formation of D-aminoacyl-tRNA entities in vivo and helps enforce protein L-homochirality. The sequence is that of D-aminoacyl-tRNA deacylase from Pseudomonas putida (strain GB-1).